The primary structure comprises 689 residues: DNA ligase (689 aa).

Residues D40–D44, S89–L90, and E121 contribute to the NAD(+) site. K123 acts as the N6-AMP-lysine intermediate in catalysis. 4 residues coordinate NAD(+): R144, E179, K295, and K319. Residues C413, C416, C431, and C437 each contribute to the Zn(2+) site. The 80-residue stretch at R610–I689 folds into the BRCT domain.

It belongs to the NAD-dependent DNA ligase family. LigA subfamily. Requires Mg(2+) as cofactor. Mn(2+) serves as cofactor.

It carries out the reaction NAD(+) + (deoxyribonucleotide)n-3'-hydroxyl + 5'-phospho-(deoxyribonucleotide)m = (deoxyribonucleotide)n+m + AMP + beta-nicotinamide D-nucleotide.. Its function is as follows. DNA ligase that catalyzes the formation of phosphodiester linkages between 5'-phosphoryl and 3'-hydroxyl groups in double-stranded DNA using NAD as a coenzyme and as the energy source for the reaction. It is essential for DNA replication and repair of damaged DNA. This is DNA ligase from Rickettsia bellii (strain RML369-C).